We begin with the raw amino-acid sequence, 213 residues long: Ribosomal RNA small subunit methyltransferase G (213 aa).

S-adenosyl-L-methionine-binding positions include Gly-77, Met-82, 104–106 (EKS), and Arg-145.

Belongs to the methyltransferase superfamily. RNA methyltransferase RsmG family.

It localises to the cytoplasm. It catalyses the reaction guanosine(527) in 16S rRNA + S-adenosyl-L-methionine = N(7)-methylguanosine(527) in 16S rRNA + S-adenosyl-L-homocysteine. Specifically methylates the N7 position of guanine in position 527 of 16S rRNA. The protein is Ribosomal RNA small subunit methyltransferase G of Pelagibacter ubique (strain HTCC1062).